The chain runs to 187 residues: ATP synthase subunit b 2 (187 aa).

Residues 32–52 (TTFAAQILWLAIAFGLLYYLM) traverse the membrane as a helical segment.

This sequence belongs to the ATPase B chain family. As to quaternary structure, F-type ATPases have 2 components, F(1) - the catalytic core - and F(0) - the membrane proton channel. F(1) has five subunits: alpha(3), beta(3), gamma(1), delta(1), epsilon(1). F(0) has three main subunits: a(1), b(2) and c(10-14). The alpha and beta chains form an alternating ring which encloses part of the gamma chain. F(1) is attached to F(0) by a central stalk formed by the gamma and epsilon chains, while a peripheral stalk is formed by the delta and b chains.

The protein localises to the cell inner membrane. Functionally, f(1)F(0) ATP synthase produces ATP from ADP in the presence of a proton or sodium gradient. F-type ATPases consist of two structural domains, F(1) containing the extramembraneous catalytic core and F(0) containing the membrane proton channel, linked together by a central stalk and a peripheral stalk. During catalysis, ATP synthesis in the catalytic domain of F(1) is coupled via a rotary mechanism of the central stalk subunits to proton translocation. In terms of biological role, component of the F(0) channel, it forms part of the peripheral stalk, linking F(1) to F(0). The b'-subunit is a diverged and duplicated form of b found in plants and photosynthetic bacteria. The sequence is that of ATP synthase subunit b 2 (atpF2) from Methylobacterium sp. (strain 4-46).